The primary structure comprises 599 residues: Vitamin B12-dependent ribonucleotide reductase (599 aa).

Residue 193–197 participates in substrate binding; the sequence is PTGTI. The tract at residues 519–555 is disordered; the sequence is LAQSAPRQAGPAKAATTAPAAKAQEPAAAPSPKQAHN. A compositionally biased stretch (low complexity) spans 526–553; it reads QAGPAKAATTAPAAKAQEPAAAPSPKQA.

Belongs to the ribonucleoside diphosphate reductase class-2 family. It depends on adenosylcob(III)alamin as a cofactor.

The enzyme catalyses a 2'-deoxyribonucleoside 5'-diphosphate + [thioredoxin]-disulfide + H2O = a ribonucleoside 5'-diphosphate + [thioredoxin]-dithiol. In terms of biological role, catalyzes the reduction of ribonucleotides to deoxyribonucleotides. May function to provide a pool of deoxyribonucleotide precursors for DNA repair during oxygen limitation and/or for immediate growth after restoration of oxygen. This Streptantibioticus cattleyicolor (Streptomyces cattleya) protein is Vitamin B12-dependent ribonucleotide reductase (nrdJ).